The chain runs to 255 residues: Triosephosphate isomerase (255 aa).

Residue 9 to 11 (NWK) participates in substrate binding. His95 acts as the Electrophile in catalysis. Residue Glu167 is the Proton acceptor of the active site. Substrate-binding positions include Gly173, Ser212, and 233–234 (GG).

This sequence belongs to the triosephosphate isomerase family. Homodimer.

It is found in the cytoplasm. The enzyme catalyses D-glyceraldehyde 3-phosphate = dihydroxyacetone phosphate. It participates in carbohydrate biosynthesis; gluconeogenesis. The protein operates within carbohydrate degradation; glycolysis; D-glyceraldehyde 3-phosphate from glycerone phosphate: step 1/1. Involved in the gluconeogenesis. Catalyzes stereospecifically the conversion of dihydroxyacetone phosphate (DHAP) to D-glyceraldehyde-3-phosphate (G3P). The protein is Triosephosphate isomerase of Enterobacter cloacae.